Here is a 165-residue protein sequence, read N- to C-terminus: MFTVKEKNRQELEEELNDLEFQIYRMQENMKDLSKDAKVLGIDQSKHDEWMIVSSIDDGQTCKIMLTDCKTAYRGKGCFSLVASYKDDAIHIGDIKGPPNHGFGSICMKYLKDIARDHNIPKVTGDIAKRDWNHVDRLIHFYEKHHFKVCIDHDTQSGSIKWVDL.

Residues 1–38 (MFTVKEKNRQELEEELNDLEFQIYRMQENMKDLSKDAK) adopt a coiled-coil conformation.

This is an uncharacterized protein from Bacillus subtilis (strain 168).